The following is a 137-amino-acid chain: Acidic phospholipase A2 VP8 (137 aa).

The first 16 residues, 1 to 16, serve as a signal peptide directing secretion; the sequence is MRILWIVAVCLIGVEG. Cystine bridges form between cysteine 41–cysteine 130, cysteine 43–cysteine 59, cysteine 58–cysteine 110, cysteine 64–cysteine 137, cysteine 65–cysteine 103, cysteine 72–cysteine 96, and cysteine 90–cysteine 101. Ca(2+)-binding residues include tyrosine 42, glycine 44, and glycine 46. The active site involves histidine 62. Position 63 (aspartate 63) interacts with Ca(2+). Residue aspartate 104 is part of the active site.

Belongs to the phospholipase A2 family. Group II subfamily. D49 sub-subfamily. In terms of assembly, does not form a complex. It depends on Ca(2+) as a cofactor. Expressed by the venom gland.

It localises to the secreted. The enzyme catalyses a 1,2-diacyl-sn-glycero-3-phosphocholine + H2O = a 1-acyl-sn-glycero-3-phosphocholine + a fatty acid + H(+). Snake venom phospholipase A2 (PLA2) that is not toxic by itself, but the synergistical mixture of a basic and this acidic protein is lethal. PLA2 catalyzes the calcium-dependent hydrolysis of the 2-acyl groups in 3-sn-phosphoglycerides. The protein is Acidic phospholipase A2 VP8 of Daboia palaestinae (Palestine viper).